The primary structure comprises 143 residues: Hemoglobin subunit alpha-2 (143 aa).

Serine 2 carries the post-translational modification N-acetylserine. Residues 2–143 (SLSSKDKATV…LALALSEKYR (142 aa)) form the Globin domain. Histidine 60 lines the O2 pocket. Heme b is bound at residue histidine 89.

It belongs to the globin family. In terms of assembly, hb 2 is a heterotetramer of two alpha-2 and two beta-1 chains. Hb 3 is a heterotetramer of two alpha-2 and two beta-2 chains. As to expression, red blood cells.

Its function is as follows. Involved in oxygen transport from gills to the various peripheral tissues. This Arctogadus glacialis (Arctic cod) protein is Hemoglobin subunit alpha-2 (hba2).